Reading from the N-terminus, the 132-residue chain is Sec-independent protein translocase protein TatB (132 aa).

The helical transmembrane segment at 2–22 threads the bilayer; it reads FDGIGFMELLLIGILGLVVLG. Polar residues-rich tracts occupy residues 86–95 and 116–132; these read LKQAAQSVNR and IAET…KNNG. A disordered region spans residues 86 to 132; sequence LKQAAQSVNRPYQLDESNEQEPKIAPPQANIAETPTQSGDTHSKNNG.

It belongs to the TatB family. As to quaternary structure, the Tat system comprises two distinct complexes: a TatABC complex, containing multiple copies of TatA, TatB and TatC subunits, and a separate TatA complex, containing only TatA subunits. Substrates initially bind to the TatABC complex, which probably triggers association of the separate TatA complex to form the active translocon.

It is found in the cell inner membrane. Its function is as follows. Part of the twin-arginine translocation (Tat) system that transports large folded proteins containing a characteristic twin-arginine motif in their signal peptide across membranes. Together with TatC, TatB is part of a receptor directly interacting with Tat signal peptides. TatB may form an oligomeric binding site that transiently accommodates folded Tat precursor proteins before their translocation. This chain is Sec-independent protein translocase protein TatB, found in Shewanella denitrificans (strain OS217 / ATCC BAA-1090 / DSM 15013).